Consider the following 1014-residue polypeptide: Calcium-transporting ATPase 2, plasma membrane-type (1014 aa).

Methionine 1 bears the N-acetylmethionine mark. Topologically, residues 1 to 160 are cytoplasmic; sequence MESYLNENFD…NKFAESEMRG (160 aa). The interval 20–31 is interaction with calmodulin; it reads VLEKWRNLCGVV. Serine 45 carries the post-translational modification Phosphoserine; by CPK1. A helical membrane pass occupies residues 161 to 181; the sequence is FWVFVWEALQDMTLMILGVCA. The Lumenal segment spans residues 182 to 199; that stretch reads FVSLIVGIATEGWPKGSH. A helical transmembrane segment spans residues 200 to 220; sequence DGLGIAASILLVVFVTATSDY. The Cytoplasmic segment spans residues 221 to 348; sequence RQSLQFRDLD…DDETPLQVKL (128 aa). A helical transmembrane segment spans residues 349-368; that stretch reads NGVATIIGKIGLFFAVVTFA. The Lumenal segment spans residues 369 to 398; the sequence is VLVQGMFMRKLSTGTHWVWSGDEALELLEY. A helical membrane pass occupies residues 399-416; the sequence is FAIAVTIVVVAVPEGLPL. Residues 417–810 are Cytoplasmic-facing; sequence AVTLSLAFAM…KWGRSVYINI (394 aa). The active-site 4-aspartylphosphate intermediate is the aspartate 454. Mg(2+) is bound by residues aspartate 755 and aspartate 759. The chain crosses the membrane as a helical span at residues 811 to 829; sequence QKFVQFQLTVNVVALVVNF. Over 830–840 the chain is Lumenal; sequence SSACLTGSAPL. A helical membrane pass occupies residues 841–861; that stretch reads TAVQLLWVNMIMDTLGALALA. Topologically, residues 862 to 881 are cytoplasmic; the sequence is TEPPNDELMKRLPVGRRGNF. The helical transmembrane segment at 882-904 threads the bilayer; that stretch reads ITNAMWRNILGQAVYQFIVIWIL. Over 905–916 the chain is Lumenal; that stretch reads QAKGKAMFGLDG. The helical transmembrane segment at 917-938 threads the bilayer; it reads PDSTLMLNTLIFNCFVFCQVFN. The Cytoplasmic portion of the chain corresponds to 939–956; sequence EISSREMEEIDVFKGILD. Residues 957-978 traverse the membrane as a helical segment; it reads NYVFVVVIGATVFFQIIIIEFL. At 979-988 the chain is on the lumenal side; sequence GTFASTTPLT. The chain crosses the membrane as a helical span at residues 989–1010; the sequence is ITQWIFSIFIGFLGMPIAAGLK. At 1011-1014 the chain is on the cytoplasmic side; it reads TIPV.

The protein belongs to the cation transport ATPase (P-type) (TC 3.A.3) family. Type IIB subfamily.

It is found in the endoplasmic reticulum membrane. It carries out the reaction Ca(2+)(in) + ATP + H2O = Ca(2+)(out) + ADP + phosphate + H(+). With respect to regulation, activated by calmodulin. Its function is as follows. This magnesium-dependent enzyme catalyzes the hydrolysis of ATP coupled with the translocation of calcium from the cytosol into the endoplasmic reticulum. The chain is Calcium-transporting ATPase 2, plasma membrane-type (ACA2) from Arabidopsis thaliana (Mouse-ear cress).